We begin with the raw amino-acid sequence, 297 residues long: Dehydrodolichyl diphosphate synthase complex subunit Nus1 (297 aa).

2 helical membrane passes run 7–26 (LVWRVLHALLCLHLTLTSWL) and 40–56 (CCRAASAAVLAPLGFTL). A compositionally biased stretch (basic residues) spans 63–73 (GRNRRHHRHPH). The tract at residues 63-86 (GRNRRHHRHPHGGPGPGPGPAATH) is disordered. Residues 121 to 139 (IASLVVWCMAVGISYISVY) traverse the membrane as a helical segment. 2 N-linked (GlcNAc...) asparagine glycosylation sites follow: N148 and N275. The RXG motif; crucial for prenyltransferase activity motif lies at 294–296 (RLG). Isopentenyl diphosphate contacts are provided by L295 and G296.

This sequence belongs to the UPP synthase family. In terms of assembly, the active dehydrodolichyl diphosphate synthase complex is a heterotetramer composed of a dimer of heterodimer of DHDDS and NUS1. Interacts with NPC2. Mg(2+) is required as a cofactor. Highly expressed in heart, liver, kidney and pancreas.

It localises to the endoplasmic reticulum membrane. The catalysed reaction is n isopentenyl diphosphate + (2E,6E)-farnesyl diphosphate = a di-trans,poly-cis-polyprenyl diphosphate + n diphosphate. It functions in the pathway protein modification; protein glycosylation. It participates in lipid metabolism. With DHDDS, forms the dehydrodolichyl diphosphate synthase (DDS) complex, an essential component of the dolichol monophosphate (Dol-P) biosynthetic machinery. Both subunits contribute to enzymatic activity, i.e. condensation of multiple copies of isopentenyl pyrophosphate (IPP) to farnesyl pyrophosphate (FPP) to produce dehydrodolichyl diphosphate (Dedol-PP), a precursor of dolichol phosphate which is utilized as a sugar carrier in protein glycosylation in the endoplasmic reticulum (ER). Synthesizes long-chain polyprenols, mostly of C95 and C100 chain length. Regulates the glycosylation and stability of nascent NPC2, thereby promoting trafficking of LDL-derived cholesterol. Acts as a specific receptor for the N-terminus of Nogo-B, a neural and cardiovascular regulator. The protein is Dehydrodolichyl diphosphate synthase complex subunit Nus1 of Mus musculus (Mouse).